Here is a 489-residue protein sequence, read N- to C-terminus: Dipeptide and tripeptide permease B (489 aa).

At 1–27 the chain is on the cytoplasmic side; that stretch reads MNTTTPMGMLQQPRPFFMIFFVELWER. The helical transmembrane segment at 28–48 threads the bilayer; it reads FGYYGVQGVLAVFFVKQLGFS. Residues 49–52 lie on the Periplasmic side of the membrane; it reads QEQA. Residues 53–73 form a helical membrane-spanning segment; the sequence is FVTFGAFAALVYGLISIGGYV. The Cytoplasmic portion of the chain corresponds to 74-82; that stretch reads GDHLLGTKR. The chain crosses the membrane as a helical span at residues 83–103; the sequence is TIVLGALVLAIGYFMTGLSLL. The Periplasmic portion of the chain corresponds to 104-106; the sequence is KPD. A helical membrane pass occupies residues 107-127; sequence LIFIALGTIAVGNGLFKANPA. The Cytoplasmic portion of the chain corresponds to 128 to 146; it reads SLLSKCYPPKAPRLDGAFT. Residues 147-167 traverse the membrane as a helical segment; that stretch reads LFYMSINIGSLIALSLAPVIA. At 168–172 the chain is on the periplasmic side; sequence DRFGY. The chain crosses the membrane as a helical span at residues 173 to 193; sequence SVTYNLCGAGLIIALLVYIAC. At 194–210 the chain is on the cytoplasmic side; sequence RGMVKDIGSEPDFRPMS. The helical transmembrane segment at 211 to 231 threads the bilayer; sequence FSKLLYVLLGSVVMIFVCAWL. Over 232–233 the chain is Periplasmic; the sequence is MH. A helical membrane pass occupies residues 234 to 254; sequence NVEVANLVLIVLSIVVTIIFF. At 255–267 the chain is on the cytoplasmic side; sequence RQAFKLDKTGRNK. The helical transmembrane segment at 268–288 threads the bilayer; sequence MFVAFVLMLEAVVFYILYAQM. Topologically, residues 289–311 are periplasmic; sequence PTSLNFFAINNVHHEILGFSINP. A helical transmembrane segment spans residues 312–332; it reads VSFQALNPFWVVLASPILAGI. Residues 333 to 350 are Cytoplasmic-facing; that stretch reads YTHLGSKGKDLSMPMKFT. A helical membrane pass occupies residues 351–371; that stretch reads LGMFMCSLGFLTAAAAGMWFA. At 372–380 the chain is on the periplasmic side; sequence DAQGLTSPW. The chain crosses the membrane as a helical span at residues 381 to 401; that stretch reads FIVLVYLFQSLGELFISALGL. At 402 to 411 the chain is on the cytoplasmic side; the sequence is AMVAALVPQH. A helical transmembrane segment spans residues 412-432; it reads LMGFILGISFLTQAAAFLLGG. Over 433–456 the chain is Periplasmic; that stretch reads YVATFTAVPDNITDPLETLPVYTN. The chain crosses the membrane as a helical span at residues 457-477; that stretch reads VFGKIGLVTLGVAVVMLLMVP. Over 478-489 the chain is Cytoplasmic; that stretch reads WLKRMIAAPESH.

This sequence belongs to the major facilitator superfamily. Proton-dependent oligopeptide transporter (POT/PTR) (TC 2.A.17) family. DtpB subfamily.

Its subcellular location is the cell inner membrane. Its function is as follows. Proton-dependent permease that transports di- and tripeptides. This is Dipeptide and tripeptide permease B from Shigella dysenteriae serotype 1 (strain Sd197).